Reading from the N-terminus, the 438-residue chain is MAPKKRNGFMTFVKEWQANNPVARGLSNSEAVAKCDPIWKSMGDQERGPYNSMAKNANVLERTAKKERLNCLGGSVAEMEIEKNEAISAELQMKRKIERIILTAKNSMELENEDFVFVSFNYFTKALTGDIYVPAEFSACRYSLKGGISSNYSTMINPGHIIYGQSRDAQDHSKTTHKLPLPPQAFGETNMGKLYIDIFNWLSVRNEEKLDQDPVIVYTTPELMPVVKSCFRYLASEAEIDEDERKIMVFDIHHLFYTLKKSVLDVAGVTNDRINFHVTNNFFVKDFFEYTEGISCDYHEKIDRSKYCTNSMVKRWGFTFSDYMCADLAIPLQPGKHIPLKVKPNYTITPASSSTNFDEISLDSYYSAPPRIQKEMGSRDLSPSSSHQSVSRAYVPRDHSVYGGTLDSDEEFPSLGGRRRQLPDKSHFNMGAGKKIAR.

The segment at residues 2–69 is a DNA-binding region (HMG box); sequence APKKRNGFMT…LERTAKKERL (68 aa). The tract at residues 374-438 is disordered; the sequence is KEMGSRDLSP…NMGAGKKIAR (65 aa). The span at 381–391 shows a compositional bias: polar residues; sequence LSPSSSHQSVS.

The protein belongs to the maelstrom family.

Its subcellular location is the cytoplasm. The protein localises to the nucleus. In terms of biological role, involved both in the piRNA and miRNA metabolic processes. As a component of the meiotic nuage, plays a central role during oogenesis by repressing transposable elements and preventing their mobilization, which is essential for the germline integrity. Repression of transposable elements is mediated via the piRNA metabolic process, which mediates the repression of transposable elements during meiosis by forming complexes composed of piRNAs and Piwi proteins and governs the repression of transposons. As a nuclear component, it is required for proper differentiation in the germline stem cell (GSC) lineage by repressing microRNA-7 (miR-7), thereby acting as an indirect regulator of bag-of-marbles (Bam). Acts by binding to the promoter of miR-7 gene and repressing its expression; miR-7 repression alleviates the Bam repression by miR-7, thereby allowing differentiation in the germline stem cell (GSC) lineage. This is Protein maelstrom 1 (mael1) from Drosophila persimilis (Fruit fly).